A 536-amino-acid chain; its full sequence is MKETGIHNKAASISTSGLKELSAVFYNLGPARLYEETIRRGEAELSAQGALVARTGQHTGRSPKDKFVVRDANTEDHVWWDNNKPMTPEAFELLYADFIEHAKGRELFVQDLIGGADADNKINARVITEYAWHSLFIRNLLIRPSQEALASYVPEMTIIDLPSFKADPERYGVRTETVIAVDLTRKIVLIGGTSYAGEMKKSVFTALNYILPAKGVMPMHCSANEGPNGDTAVFFGLSGTGKTTLSADPTRTLIGDDEHGWGEHGVFNFEGGCYAKTIRLSAEAEPEIYATTQRFGTVLENVVLDENRQPDFDDGSLTENTRCAYPLDFIPNASKSGKGGQPKNIIMLTADAFGVMPPIAKLTPAQAMYHFLSGYTAKVAGTEKGVTEPEATFSTCFGAPFMPRHPSEYGNLLRKLIAEHKVDCWLVNTGWTGGAYGVGKRMPIKATRALLAAALDGSLNNAEFRIDPNFGFAVPVEVPGVESSILDPRSTWADKVAYDAQAKKLVDMFVSNFEKFESHVDHEVKDAAPAIRMAAE.

Substrate contacts are provided by R61, Y195, and K201. Residues K201, H220, and 236–244 contribute to the ATP site; that span reads GLSGTGKTT. Mn(2+)-binding residues include K201 and H220. Position 257 (D257) interacts with Mn(2+). Positions 285, 322, and 447 each coordinate ATP. R322 contributes to the substrate binding site.

It belongs to the phosphoenolpyruvate carboxykinase (ATP) family. Mn(2+) serves as cofactor.

The protein resides in the cytoplasm. It catalyses the reaction oxaloacetate + ATP = phosphoenolpyruvate + ADP + CO2. It functions in the pathway carbohydrate biosynthesis; gluconeogenesis. Involved in the gluconeogenesis. Catalyzes the conversion of oxaloacetate (OAA) to phosphoenolpyruvate (PEP) through direct phosphoryl transfer between the nucleoside triphosphate and OAA. The chain is Phosphoenolpyruvate carboxykinase (ATP) from Brucella suis biovar 1 (strain 1330).